Consider the following 201-residue polypeptide: Esterase TesA (201 aa).

The first 21 residues, 1–21 (MRALLLSGCLALVLLTQQAAA), serve as a signal peptide directing secretion. The Nucleophile role is filled by serine 30. Active-site residues include aspartate 177 and histidine 180.

Belongs to the 'GDSL' lipolytic enzyme family.

The protein resides in the secreted. It catalyses the reaction a carboxylic ester + H2O = an alcohol + a carboxylate + H(+). In terms of biological role, esterase that exhibits the highest activity towards Tween detergents and p-nitrophenyl esters of short acyl chain length. Also displays a low thioesterase activity towards palmitoyl-coenzyme A, but is not active towards acetyl-coenzyme A. The protein is Esterase TesA (tesA) of Pseudomonas aeruginosa (strain ATCC 15692 / DSM 22644 / CIP 104116 / JCM 14847 / LMG 12228 / 1C / PRS 101 / PAO1).